Consider the following 466-residue polypeptide: Asparagine--tRNA ligase (466 aa).

Belongs to the class-II aminoacyl-tRNA synthetase family. In terms of assembly, homodimer.

It localises to the cytoplasm. The catalysed reaction is tRNA(Asn) + L-asparagine + ATP = L-asparaginyl-tRNA(Asn) + AMP + diphosphate + H(+). This chain is Asparagine--tRNA ligase, found in Shewanella sediminis (strain HAW-EB3).